Here is a 203-residue protein sequence, read N- to C-terminus: Ras-related protein Rab-24 (203 aa).

Tyr17 is modified (phosphotyrosine). The GTP site is built by Gly19, Lys20, Thr21, and Thr40. Residues Thr21, Thr40, and Asp63 each coordinate Mg(2+). The segment at 30 to 45 (DRFLVGPYQNTIGAAF) is switch I. The tract at residues 63-80 (DTAGSERYEAMSRIYYRG) is switch II. The GTP site is built by Gly66, Lys121, Asp123, and Lys156. Tyr172 carries the phosphotyrosine modification. 2 S-geranylgeranyl cysteine lipidation sites follow: Cys200 and Cys201.

Belongs to the small GTPase superfamily. Rab family. In terms of assembly, interacts with ZFYVE20. Does not interact with the GDP dissociation inhibitors ARHGDIA and ARHGDIB. Mg(2+) serves as cofactor. In terms of processing, prenylated; prenylation is required for RAB24 localization to autophagosomes. Isoprenylation is inefficient compared to other Rab family members. Post-translationally, phosphorylated at Tyr-17 and Tyr-172. Cytosolic pool of RAB24 is more phosphorylated than the membrane-associated pool. As to expression, widely expressed, with highest expression in brain.

The protein localises to the cytoplasm. It is found in the cytosol. The protein resides in the membrane. It localises to the cytoplasmic vesicle. Its subcellular location is the autophagosome membrane. The protein localises to the perinuclear region. It is found in the cytoskeleton. The protein resides in the spindle. It carries out the reaction GTP + H2O = GDP + phosphate + H(+). With respect to regulation, regulated by guanine nucleotide exchange factors (GEFs) which promote the exchange of bound GDP for free GTP. Regulated by GTPase activating proteins (GAPs) which increase the GTP hydrolysis activity. Inhibited by GDP dissociation inhibitors (GDIs). In terms of biological role, the small GTPases Rab are key regulators of intracellular membrane trafficking, from the formation of transport vesicles to their fusion with membranes. Rabs cycle between an inactive GDP-bound form and an active GTP-bound form that is able to recruit to membranes different sets of downstream effectors directly responsible for vesicle formation, movement, tethering and fusion. RAB24 is an atypical RAB protein that presents low GTPase activity and thereby exists predominantly in the GTP-bound active state. RAB24 is required for the clearance of late autophagic vacuoles under basal conditions. It is not needed for starvation-induced autophagy. Involved in the modulation of meiotic apparatus assembly and meiotic progression during oocyte maturation, possibly through regulation of kinetochore-microtubule interaction. The chain is Ras-related protein Rab-24 from Mus musculus (Mouse).